Consider the following 54-residue polypeptide: Ovomucoid (54 aa).

The 51-residue stretch at 4-54 folds into the Kazal-like domain; the sequence is VDCSDYPTHGCTLELKPICGSDNQTYSNKCGFCNAVAQSNGTLTLSHFGKC. 3 disulfide bridges follow: cysteine 6-cysteine 36, cysteine 14-cysteine 33, and cysteine 22-cysteine 54. N-linked (GlcNAc...) asparagine glycosylation is present at asparagine 43.

It is found in the secreted. This Aepypodius arfakianus (Wattled brush turkey) protein is Ovomucoid.